Reading from the N-terminus, the 632-residue chain is DNA topoisomerase 4 subunit B (632 aa).

Residues tyrosine 5, asparagine 42, aspartate 69, 110–116, and lysine 334 contribute to the ATP site; that span reads GLHGVGI. The 114-residue stretch at 412 to 525 folds into the Toprim domain; that stretch reads TELFLVEGDS…DGHVYVAMPP (114 aa). Mg(2+) contacts are provided by glutamate 418, aspartate 490, and aspartate 492.

It belongs to the type II topoisomerase family. ParE type 1 subfamily. Heterotetramer composed of ParC and ParE. Mg(2+) serves as cofactor. The cofactor is Mn(2+). Ca(2+) is required as a cofactor.

The enzyme catalyses ATP-dependent breakage, passage and rejoining of double-stranded DNA.. Its function is as follows. Topoisomerase IV is essential for chromosome segregation. It relaxes supercoiled DNA. Performs the decatenation events required during the replication of a circular DNA molecule. The polypeptide is DNA topoisomerase 4 subunit B (Haemophilus influenzae (strain ATCC 51907 / DSM 11121 / KW20 / Rd)).